Consider the following 371-residue polypeptide: 4-hydroxy-3-methylbut-2-en-1-yl diphosphate synthase (flavodoxin) (371 aa).

4 residues coordinate [4Fe-4S] cluster: C270, C273, C305, and E312.

This sequence belongs to the IspG family. [4Fe-4S] cluster serves as cofactor.

The enzyme catalyses (2E)-4-hydroxy-3-methylbut-2-enyl diphosphate + oxidized [flavodoxin] + H2O + 2 H(+) = 2-C-methyl-D-erythritol 2,4-cyclic diphosphate + reduced [flavodoxin]. The protein operates within isoprenoid biosynthesis; isopentenyl diphosphate biosynthesis via DXP pathway; isopentenyl diphosphate from 1-deoxy-D-xylulose 5-phosphate: step 5/6. Functionally, converts 2C-methyl-D-erythritol 2,4-cyclodiphosphate (ME-2,4cPP) into 1-hydroxy-2-methyl-2-(E)-butenyl 4-diphosphate. This chain is 4-hydroxy-3-methylbut-2-en-1-yl diphosphate synthase (flavodoxin), found in Shewanella halifaxensis (strain HAW-EB4).